The primary structure comprises 144 residues: Prefoldin subunit alpha (144 aa).

It belongs to the prefoldin subunit alpha family. In terms of assembly, heterohexamer of two alpha and four beta subunits.

The protein localises to the cytoplasm. In terms of biological role, molecular chaperone capable of stabilizing a range of proteins. Seems to fulfill an ATP-independent, HSP70-like function in archaeal de novo protein folding. The sequence is that of Prefoldin subunit alpha from Methanococcus maripaludis (strain DSM 14266 / JCM 13030 / NBRC 101832 / S2 / LL).